Reading from the N-terminus, the 409-residue chain is Putative lipoate-protein ligase A (409 aa).

The BPL/LPL catalytic domain occupies 146 to 330 (GPDNCRLLFY…RFQKTFKVDG (185 aa)). Residues R188, 193–196 (GTVL), and K249 contribute to the ATP site. K249 contacts (R)-lipoate.

It belongs to the LplA family. Monomer.

It carries out the reaction L-lysyl-[lipoyl-carrier protein] + (R)-lipoate + ATP = N(6)-[(R)-lipoyl]-L-lysyl-[lipoyl-carrier protein] + AMP + diphosphate + H(+). It participates in protein modification; protein lipoylation via exogenous pathway; protein N(6)-(lipoyl)lysine from lipoate: step 1/2. It functions in the pathway protein modification; protein lipoylation via exogenous pathway; protein N(6)-(lipoyl)lysine from lipoate: step 2/2. In terms of biological role, catalyzes both the ATP-dependent activation of exogenously supplied lipoate to lipoyl-AMP and the transfer of the activated lipoyl onto the lipoyl domains of lipoate-dependent enzymes. The polypeptide is Putative lipoate-protein ligase A (AIM22) (Saccharomyces cerevisiae (strain ATCC 204508 / S288c) (Baker's yeast)).